The chain runs to 297 residues: uncharacterized protein (297 aa).

This is an uncharacterized protein from Bacillus subtilis (strain 168).